We begin with the raw amino-acid sequence, 900 residues long: Peroxisomal hydratase-dehydrogenase-epimerase (900 aa).

Short-chain dehydrogenase like regions lie at residues 6–230 and 319–535; these read SFKD…THES and SLCN…ASEE. The NADP(+) site is built by Ile-14, Lys-53, Asn-100, Arg-133, Tyr-165, and Lys-169. Residue Tyr-165 is the Proton donor of the active site. The Lowers pKa of active site Tyr role is filled by Lys-169. (3R)-3-hydroxydecanoyl-CoA is bound by residues His-689, Gly-690, Lys-719, Asp-803, Asn-805, Gly-826, Phe-851, and Thr-852. The 113-residue stretch at 775 to 887 folds into the MaoC-like domain; sequence EVPHGKVPDF…DTTRNVIVLD (113 aa). Residues 898 to 900 carry the Microbody targeting signal motif; it reads SKL.

This sequence belongs to the short-chain dehydrogenases/reductases (SDR) family. In terms of assembly, monomer.

The protein localises to the peroxisome. The enzyme catalyses a (3R)-3-hydroxyacyl-CoA = a (2E)-enoyl-CoA + H2O. The catalysed reaction is a (3R)-3-hydroxyacyl-CoA + NAD(+) = a 3-oxoacyl-CoA + NADH + H(+). The protein operates within lipid metabolism; fatty acid beta-oxidation. Second trifunctional enzyme acting on the beta-oxidation pathway for fatty acids, possessing hydratase-dehydrogenase-epimerase activities. Converts trans-2-enoyl-CoA via D-3-hydroxyacyl-CoA to 3-ketoacyl-CoA. The sequence is that of Peroxisomal hydratase-dehydrogenase-epimerase (FOX2) from Saccharomyces cerevisiae (strain ATCC 204508 / S288c) (Baker's yeast).